An 843-amino-acid polypeptide reads, in one-letter code: Beta-mannosidase B (843 aa).

Residue E430 is the Proton donor of the active site. N-linked (GlcNAc...) asparagine glycosylation is present at N721.

It belongs to the glycosyl hydrolase 2 family. Beta-mannosidase B subfamily.

It carries out the reaction Hydrolysis of terminal, non-reducing beta-D-mannose residues in beta-D-mannosides.. It participates in glycan metabolism; N-glycan degradation. Exoglycosidase that cleaves the single beta-linked mannose residue from the non-reducing end of beta-mannosidic oligosaccharides of various complexity and length. Prefers mannobiose over mannotriose and has no activity against polymeric mannan. Is also severely restricted by galactosyl substitutions at the +1 subsite. The chain is Beta-mannosidase B (mndB) from Aspergillus terreus (strain NIH 2624 / FGSC A1156).